A 99-amino-acid polypeptide reads, in one-letter code: Large ribosomal subunit protein eL21 (99 aa).

Over residues 1 to 14 the composition is skewed to polar residues; the sequence is MPNSNGPLSNSGGK. A disordered region spans residues 1-38; it reads MPNSNGPLSNSGGKLQNDPRDRGTSPPQRAIADYDDGE.

The protein belongs to the eukaryotic ribosomal protein eL21 family.

This chain is Large ribosomal subunit protein eL21, found in Halobacterium salinarum (strain ATCC 29341 / DSM 671 / R1).